We begin with the raw amino-acid sequence, 344 residues long: L-rhamnose-proton symporter (344 aa).

Transmembrane regions (helical) follow at residues 4-24 (AITM…CFYA), 38-58 (WSVG…ATLL), 72-92 (TLLP…NYGL), 101-121 (MGIG…TPII), 131-151 (TQGG…VGIV), 175-195 (LLLA…MNAA), 214-234 (LPSY…FCFI), 259-279 (LLLS…YAWG), 290-310 (MSWM…GLVL), and 323-343 (VLSL…LGMA).

The protein belongs to the L-rhamnose transporter (TC 2.A.7.6) family.

Its subcellular location is the cell inner membrane. It carries out the reaction L-rhamnopyranose(in) + H(+)(in) = L-rhamnopyranose(out) + H(+)(out). Uptake of L-rhamnose across the cytoplasmic membrane with the concomitant transport of protons into the cell (symport system). This chain is L-rhamnose-proton symporter, found in Klebsiella pneumoniae (strain 342).